The chain runs to 373 residues: GTPase-activating protein gyp10 (373 aa).

The 186-residue stretch at 35-220 folds into the Rab-GAP TBC domain; that stretch reads FLMKSLRKSV…RLFDFFISSH (186 aa). Residues 343 to 363 form a helical membrane-spanning segment; sequence IFNGCNMLAAITVIGIGIVAS.

Its subcellular location is the endoplasmic reticulum membrane. Functionally, has a role in vesicular trafficking and septation during cytokinesis. This Schizosaccharomyces pombe (strain 972 / ATCC 24843) (Fission yeast) protein is GTPase-activating protein gyp10 (gyp10).